The chain runs to 236 residues: Flagellar L-ring protein (236 aa).

The signal sequence occupies residues 1–16 (MRMRITAILAAGLLAG). Cys17 carries N-palmitoyl cysteine lipidation. Cys17 carries the S-diacylglycerol cysteine lipid modification. Residues 96 to 143 (ENETDRSRKNSSGFNLGASGESQTSDFAWSGDLEYGSNTKTEGDGKTE) form a disordered region. Residues 105 to 122 (NSSGFNLGASGESQTSDF) show a composition bias toward polar residues.

It belongs to the FlgH family. The basal body constitutes a major portion of the flagellar organelle and consists of four rings (L,P,S, and M) mounted on a central rod.

The protein resides in the cell outer membrane. It localises to the bacterial flagellum basal body. In terms of biological role, assembles around the rod to form the L-ring and probably protects the motor/basal body from shearing forces during rotation. In Sinorhizobium medicae (strain WSM419) (Ensifer medicae), this protein is Flagellar L-ring protein.